Consider the following 176-residue polypeptide: Flavodoxin 1 (176 aa).

One can recognise a Flavodoxin-like domain in the interval 4-165 (TGIFFGSDTG…RVEKWVKQIS (162 aa)).

The protein belongs to the flavodoxin family. The cofactor is FMN.

In terms of biological role, low-potential electron donor to a number of redox enzymes (Potential). Involved in the reactivation of inactive cob(II)alamin in methionine synthase. This chain is Flavodoxin 1 (fldA), found in Escherichia coli O157:H7.